The chain runs to 273 residues: Tryptase-2 (273 aa).

The N-terminal stretch at 1–18 (MLHLLALALLLSLVSAAP) is a signal peptide. A propeptide spans 19-28 (APGQALQRSG) (activation peptide). The Peptidase S1 domain occupies 29 to 270 (IIGGKEAPGS…YLDWIHQYVP (242 aa)). A disulfide bridge links Cys57 with Cys73. Residues His72 and Asp119 each act as charge relay system in the active site. 3 cysteine pairs are disulfide-bonded: Cys153/Cys228, Cys186/Cys209, and Cys218/Cys246. The active-site Charge relay system is the Ser222. Asn231 carries N-linked (GlcNAc...) asparagine glycosylation.

This sequence belongs to the peptidase S1 family. Tryptase subfamily. Homotetramer.

It localises to the secreted. It carries out the reaction Preferential cleavage: Arg-|-Xaa, Lys-|-Xaa, but with more restricted specificity than trypsin.. In terms of biological role, tryptase is the major neutral protease present in mast cells and is secreted upon the coupled activation-degranulation response of this cell type. The sequence is that of Tryptase-2 from Ovis aries (Sheep).